The following is a 596-amino-acid chain: Elongation factor 4 (596 aa).

A tr-type G domain is found at Lys-2–Ala-184. GTP-binding positions include Asp-14–Thr-19 and Asn-131–Asp-134.

It belongs to the TRAFAC class translation factor GTPase superfamily. Classic translation factor GTPase family. LepA subfamily.

It localises to the cell inner membrane. The catalysed reaction is GTP + H2O = GDP + phosphate + H(+). Required for accurate and efficient protein synthesis under certain stress conditions. May act as a fidelity factor of the translation reaction, by catalyzing a one-codon backward translocation of tRNAs on improperly translocated ribosomes. Back-translocation proceeds from a post-translocation (POST) complex to a pre-translocation (PRE) complex, thus giving elongation factor G a second chance to translocate the tRNAs correctly. Binds to ribosomes in a GTP-dependent manner. This is Elongation factor 4 from Colwellia psychrerythraea (strain 34H / ATCC BAA-681) (Vibrio psychroerythus).